The following is a 396-amino-acid chain: Phosphoglycerate kinase (396 aa).

Substrate is bound by residues 20 to 22, Arg-35, 58 to 61, Arg-115, and Arg-155; these read DIN and HQGR. Residues Glu-328 and 353 to 356 each bind ATP; that span reads GGDT.

This sequence belongs to the phosphoglycerate kinase family. In terms of assembly, monomer.

It is found in the cytoplasm. The catalysed reaction is (2R)-3-phosphoglycerate + ATP = (2R)-3-phospho-glyceroyl phosphate + ADP. Its pathway is carbohydrate degradation; glycolysis; pyruvate from D-glyceraldehyde 3-phosphate: step 2/5. This chain is Phosphoglycerate kinase, found in Natronomonas pharaonis (strain ATCC 35678 / DSM 2160 / CIP 103997 / JCM 8858 / NBRC 14720 / NCIMB 2260 / Gabara) (Halobacterium pharaonis).